The following is a 220-amino-acid chain: Antistasin (220 aa).

The signal sequence occupies residues 1 to 19 (MNYLFVFLALSAAVTFANA). Antistasin-like domains follow at residues 21–46 (CNKIQCRMFCKFGFQQDENGCDICKC), 54–79 (CSNRYCKMLCPEGFQVDANGCQICRC), 91–117 (CDGLKQCKMHCENGFVRDENGCPKCEC), 120–145 (CKQFQCLIFCPHGNEVDENGCKTCKC), 154–180 (CDDLKQCRMFCENGFVRDENGCKKCEC), and 183–208 (CKNFICQIFCEYGNVVDENGCKTCKC).

The protein belongs to the protease inhibitor I15 (antistasin) family. In terms of tissue distribution, gland cells. It is more strongly expressed in the head than in the gastric tissue.

It localises to the secreted. Functionally, this highly disulfide-bonded protein is a potent inhibitor of factor Xa. Facilitates digestion of tissues and may also protect the gastric tissues from its own digestive enzymes. May have therapeutic utility as an anticoagulant. Also exhibits a strong metastatic activity. This chain is Antistasin, found in Hydra vulgaris (Hydra).